A 669-amino-acid polypeptide reads, in one-letter code: Protein fem-1 homolog A (669 aa).

7 ANK repeats span residues 2 to 31 (DLRTAVYNAARDGKLQLLQKLLSGRSREEL), 40 to 70 (GGGTPLLIAARYGHLDVVEYLVDRCGASVEA), 82 to 111 (EGAPPLWAASAAGHLDVVRSLLRRGASVNR), 115 to 145 (TNSTPLRAACFDGHLEVVRYLVGEHQADLEV), 149 to 178 (HGHTCLMISCYKGHREIARYLLEQGAQVNR), 182 to 211 (KGNTALHDCAESGSLEILQLLLGCKARMER), and 214 to 243 (YGMTPLLAASVTGHTNIVEYLIQEQPGQEQ). Ser-108 carries the post-translational modification Phosphoserine. A disordered region spans residues 240-278 (GQEQVAGGEAQPGLPQEDPSTSQGCAQPQGAPCCSSSPE). 2 TPR repeats span residues 298–332 (VEALELLGATYVDKKRDLLGALKHWRRAMELRHQG) and 390–423 (SYYIRYRGAVYADSGNFERCIRLWKYALDMQQSN). ANK repeat units lie at residues 534–576 (NGFT…DPDS) and 580–609 (DNNTPLHIAAQNNCPAIMNALIEAGAHMDA).

It belongs to the fem-1 family. In terms of assembly, component of a CRL2 E3 ubiquitin-protein ligase complex, also named ECS (Elongin BC-CUL2/5-SOCS-box protein) complex, composed of CUL2, Elongin BC (ELOB and ELOC), RBX1 and substrate-specific adapter FEM1A. Interacts with PTGER4. Interacts with NFKB1; the interaction is direct. Phosphorylated; highly phosphorylated in myoblasts and myotubes. Phosphorylation at Ser-108 promotes PGE2-EP4-mediated inhibition of inflammation. Dephosphorylated by protein phosphatase 2A (PP2A). Present in macrophages derived from peripheral blood monocytes. Also present in atheromata (at protein level).

It is found in the mitochondrion. The protein localises to the cytoplasm. It participates in protein modification; protein ubiquitination. Functionally, substrate-recognition component of a Cul2-RING (CRL2) E3 ubiquitin-protein ligase complex of the DesCEND (destruction via C-end degrons) pathway, which recognizes a C-degron located at the extreme C terminus of target proteins, leading to their ubiquitination and degradation. The C-degron recognized by the DesCEND pathway is usually a motif of less than ten residues and can be present in full-length proteins, truncated proteins or proteolytically cleaved forms. The CRL2(FEM1A) complex specifically recognizes proteins with an arginine at the C-terminus: recognizes and binds proteins ending with -Lys/Arg-Xaa-Arg and -Lys/Arg-Xaa-Xaa-Arg C-degrons, such as SIL1 or OR51B2, leading to their ubiquitination and degradation. Promotes ubiquitination and degradation of SLBP. Involved in PGE2-EP4-mediated inhibition of inflammation of macrophages via interaction with NFKB1 and PTGER4. Promotes inflammation in brain microglia through MAP2K4/MKK4-mediated signaling. In Homo sapiens (Human), this protein is Protein fem-1 homolog A.